The chain runs to 311 residues: 1,4-dihydroxy-2-naphthoate octaprenyltransferase (311 aa).

9 consecutive transmembrane segments (helical) span residues 31-51 (LTAS…YVKV), 53-73 (LLLF…TNLF), 104-126 (TILQ…ICAS), 131-153 (LALI…LPIA), 157-177 (FGEL…SFFI), 182-202 (INMQ…AINL), 220-240 (LAIL…FAVA), 242-262 (IWVV…VVFL), and 290-310 (TAQT…ISYF).

The protein belongs to the MenA family. Type 1 subfamily.

Its subcellular location is the cell membrane. The catalysed reaction is an all-trans-polyprenyl diphosphate + 1,4-dihydroxy-2-naphthoate + H(+) = a 2-demethylmenaquinol + CO2 + diphosphate. It functions in the pathway quinol/quinone metabolism; menaquinone biosynthesis; menaquinol from 1,4-dihydroxy-2-naphthoate: step 1/2. Functionally, conversion of 1,4-dihydroxy-2-naphthoate (DHNA) to demethylmenaquinone (DMK). The chain is 1,4-dihydroxy-2-naphthoate octaprenyltransferase from Bacillus subtilis (strain 168).